A 256-amino-acid polypeptide reads, in one-letter code: Non-homologous end joining protein Ku 2 (256 aa).

Residues 13–184 (FADTDVAVKL…SLELQESPVS (172 aa)) form the Ku domain.

It belongs to the prokaryotic Ku family. In terms of assembly, homodimer. Interacts with LigD.

Functionally, with LigD forms a non-homologous end joining (NHEJ) DNA repair enzyme, which repairs dsDNA breaks with reduced fidelity. Binds linear dsDNA with 5'- and 3'- overhangs but not closed circular dsDNA nor ssDNA. Recruits and stimulates the ligase activity of LigD. The sequence is that of Non-homologous end joining protein Ku 2 from Geotalea uraniireducens (strain Rf4) (Geobacter uraniireducens).